The chain runs to 94 residues: Neutrophil antibiotic peptide NP-1 (94 aa).

Positions 1–19 (MRTLTLLTALLLLALHTQA) are cleaved as a signal peptide. A propeptide spanning residues 20–62 (KSPQGTAEEAPDQEQLVMEDQDISISFGGDKGTALQDADVKAG) is cleaved from the precursor. 3 disulfides stabilise this stretch: C65/C93, C67/C82, and C72/C92. Y84 carries the post-translational modification Phosphotyrosine.

The protein belongs to the alpha-defensin family. In terms of tissue distribution, highest expression in bone marrow and to a much lesser extent in small intestine.

The protein resides in the secreted. Functionally, active in vitro against S.aureus, fungi, Gram-positive and Gram-negative bacteria and to a lesser extent against an enveloped virus. This chain is Neutrophil antibiotic peptide NP-1, found in Rattus norvegicus (Rat).